A 274-amino-acid polypeptide reads, in one-letter code: uncharacterized protein (274 aa).

A signal peptide spans 1–30 (MTVYTPTSERQAPATTHRQMWALGDYAAIA).

It to M.tuberculosis Rv1405c.

This is an uncharacterized protein from Mycobacterium tuberculosis (strain CDC 1551 / Oshkosh).